The chain runs to 127 residues: UPF0102 protein Mmwyl1_2395 (127 aa).

Belongs to the UPF0102 family.

This is UPF0102 protein Mmwyl1_2395 from Marinomonas sp. (strain MWYL1).